The primary structure comprises 89 residues: Teretoxin Tan6.8 (89 aa).

The first 21 residues, 1 to 21 (MRLLLILLLLTPVILAGSLDE), serve as a signal peptide directing secretion. The tract at residues 22 to 42 (EPNNADGANAASFTADQEGRH) is disordered. Residues 22-44 (EPNNADGANAASFTADQEGRHKR) constitute a propeptide that is removed on maturation.

Post-translationally, contains 3 disulfide bonds. Expressed by the venom duct.

It is found in the secreted. This chain is Teretoxin Tan6.8, found in Terebra anilis (Auger snail).